The following is a 423-amino-acid chain: Histidine--tRNA ligase (423 aa).

Belongs to the class-II aminoacyl-tRNA synthetase family. Homodimer.

The protein resides in the cytoplasm. It carries out the reaction tRNA(His) + L-histidine + ATP = L-histidyl-tRNA(His) + AMP + diphosphate + H(+). The polypeptide is Histidine--tRNA ligase (Desulfosudis oleivorans (strain DSM 6200 / JCM 39069 / Hxd3) (Desulfococcus oleovorans)).